The following is a 261-amino-acid chain: Cytochrome c oxidase subunit 3 (261 aa).

The Mitochondrial matrix segment spans residues 1–15 (MAHQAHSYHMVDPSP). The chain crosses the membrane as a helical span at residues 16–34 (WPIFGATAALLTTSGLIMW). The Mitochondrial intermembrane segment spans residues 35–40 (FHYNSL). The helical transmembrane segment at 41 to 66 (YLLTLGLLSMFLVMIQWWRDIVREST) threads the bilayer. At 67–72 (FQGHHT) the chain is on the mitochondrial matrix side. A helical transmembrane segment spans residues 73–105 (PTVQKGLRYGMILFITSEAFFFLGFFWAFFHSS). The Mitochondrial intermembrane segment spans residues 106 to 128 (LAPTPELGAQWPPTGINPLNPLE). A helical membrane pass occupies residues 129–152 (VPLLNTAILLASGVTVTWAHHSIT). Over 153 to 155 (ESN) the chain is Mitochondrial matrix. Residues 156 to 183 (RKQAIHALSLTIILGFYFTALQAMEYHE) form a helical membrane-spanning segment. Over 184–190 (ASFSIAD) the chain is Mitochondrial intermembrane. Residues 191 to 223 (GVYGSTFFVATGFHGLHVIIGSSFLTVCLLRLI) form a helical membrane-spanning segment. Over 224 to 232 (KFHFTTNHH) the chain is Mitochondrial matrix. Residues 233–256 (FGFEAAAWYWHFVDVIWLFLYMSI) traverse the membrane as a helical segment. Over 257–261 (YWWGS) the chain is Mitochondrial intermembrane.

The protein belongs to the cytochrome c oxidase subunit 3 family. In terms of assembly, component of the cytochrome c oxidase (complex IV, CIV), a multisubunit enzyme composed of 14 subunits. The complex is composed of a catalytic core of 3 subunits MT-CO1, MT-CO2 and MT-CO3, encoded in the mitochondrial DNA, and 11 supernumerary subunits COX4I, COX5A, COX5B, COX6A, COX6B, COX6C, COX7A, COX7B, COX7C, COX8 and NDUFA4, which are encoded in the nuclear genome. The complex exists as a monomer or a dimer and forms supercomplexes (SCs) in the inner mitochondrial membrane with NADH-ubiquinone oxidoreductase (complex I, CI) and ubiquinol-cytochrome c oxidoreductase (cytochrome b-c1 complex, complex III, CIII), resulting in different assemblies (supercomplex SCI(1)III(2)IV(1) and megacomplex MCI(2)III(2)IV(2)).

It is found in the mitochondrion inner membrane. The catalysed reaction is 4 Fe(II)-[cytochrome c] + O2 + 8 H(+)(in) = 4 Fe(III)-[cytochrome c] + 2 H2O + 4 H(+)(out). Its function is as follows. Component of the cytochrome c oxidase, the last enzyme in the mitochondrial electron transport chain which drives oxidative phosphorylation. The respiratory chain contains 3 multisubunit complexes succinate dehydrogenase (complex II, CII), ubiquinol-cytochrome c oxidoreductase (cytochrome b-c1 complex, complex III, CIII) and cytochrome c oxidase (complex IV, CIV), that cooperate to transfer electrons derived from NADH and succinate to molecular oxygen, creating an electrochemical gradient over the inner membrane that drives transmembrane transport and the ATP synthase. Cytochrome c oxidase is the component of the respiratory chain that catalyzes the reduction of oxygen to water. Electrons originating from reduced cytochrome c in the intermembrane space (IMS) are transferred via the dinuclear copper A center (CU(A)) of subunit 2 and heme A of subunit 1 to the active site in subunit 1, a binuclear center (BNC) formed by heme A3 and copper B (CU(B)). The BNC reduces molecular oxygen to 2 water molecules using 4 electrons from cytochrome c in the IMS and 4 protons from the mitochondrial matrix. The protein is Cytochrome c oxidase subunit 3 (MT-CO3) of Struthio camelus (Common ostrich).